The chain runs to 1624 residues: Reverse gyrase (1624 aa).

An RG N-terminal-type zinc finger spans residues 1 to 42 (MKAIYRGMCPNCRGAITDERLSNKNPCEGCLSEPILSEDYNE). Residues Cys9, Cys12, Cys27, and Cys30 each coordinate Zn(2+). Residues Gln89 and 106 to 113 (APTGMGKS) each bind ATP. The Helicase ATP-binding domain maps to 93–256 (VKRIIRGKSF…KLKKQLAKLL (164 aa)). The DEAD box signature appears at 213 to 216 (DDVD). The segment at 636–1624 (DLVKSALMIV…LYEEIKRYVR (989 aa)) is topoisomerase I. A Toprim domain is found at 640–803 (SALMIVESPN…NIKRIEFHEV (164 aa)). A Mg(2+)-binding site is contributed by Glu646. Residues 720 to 749 (IKRCRDCGHQFVDWEQKGVCPRCGSRNVHD) form an RG C-terminal-type zinc finger. The Zn(2+) site is built by Cys723, Cys726, Cys739, and Cys742. Asp772 contributes to the Mg(2+) binding site. In terms of domain architecture, Topo IA-type catalytic spans 819-1623 (NEDRVNAQLV…ELYEEIKRYV (805 aa)). A DOD-type homing endonuclease domain is found at 1107-1222 (IFGVILGKGT…LSVYLYQIGI (116 aa)). Tyr1366 functions as the O-(5'-phospho-DNA)-tyrosine intermediate in the catalytic mechanism.

The protein in the N-terminal section; belongs to the DEAD box helicase family. DDVD subfamily. It in the C-terminal section; belongs to the type IA topoisomerase family. As to quaternary structure, monomer. The cofactor is Zn(2+). Mg(2+) serves as cofactor. Post-translationally, this protein undergoes a protein self splicing that involves a post-translational excision of the intervening region (intein) followed by peptide ligation.

It is found in the cytoplasm. It carries out the reaction ATP + H2O = ADP + phosphate + H(+). Its function is as follows. Modifies the topological state of DNA by introducing positive supercoils in an ATP-dependent process, increasing the linking number in steps of +1. Binds to single-stranded DNA, transiently cleaves and then rejoins the ends, introducing a positive supercoil in the process. The scissile phosphodiester is attacked by the catalytic tyrosine of the enzyme, resulting in the formation of a DNA-(5'-phosphotyrosyl)-enzyme intermediate. Probably involved in rewinding DNA strands in regions of the chromosome that have opened up to allow replication, transcription, DNA repair and/or for DNA protection. The chain is Reverse gyrase from Pyrococcus horikoshii (strain ATCC 700860 / DSM 12428 / JCM 9974 / NBRC 100139 / OT-3).